A 516-amino-acid chain; its full sequence is MSNKPIADMIETIEHFAQTQPSYPVYNVLGQEHTYGDLKSDSDSLAAVIDQLGLPEKSPVVVFGGQEYEMLATFVALTKSGHAYIPIDSHSALERVSAILEVAEPSLIIAISAFPLEQVSTPMINLAQVQEAFAQGNNYEITHPVKGDDNYYIIFTSGTTGQPKGVQISHDNLLSFTNWMITDKEFATPSRPQMLAQPPYSFDLSVMYWAPTLALGGTLFTLPSVITQDFKQLFAAIFSLPIAIWTSTPSFADMAMLSEYFNSEKMPGITHFYFDGEELTVKTAQKLRERFPNARIINAYGPTEATVALSAVAVTDEMLATLKRLPIGYTKADSPTFIIDEEGNKLPNGEQGEIIVSGPAVSKGYMNNPEKTAEAFFEFEDLPAYHTGDVGTMTDEGLLLYGGRMDFQIKFNGYRIELEDVSQNLNKSRFIESAVAVPRYNKDHKVQNLLAYVILKDSVREQFERDIDITKAIKEDLTDIMMSYMIPSKFLYRDSLPLTPNGKIDIKGLINEVNKR.

An ATP-binding site is contributed by 156 to 157 (TS). Asp203 contacts D-alanine. Residue 298 to 303 (NAYGPT) coordinates ATP. Val307 is a binding site for D-alanine. ATP-binding positions include Asp389, 401–404 (YGGR), and Lys503. Lys503 is a D-alanine binding site.

It belongs to the ATP-dependent AMP-binding enzyme family. DltA subfamily.

The protein resides in the cytoplasm. The catalysed reaction is holo-[D-alanyl-carrier protein] + D-alanine + ATP = D-alanyl-[D-alanyl-carrier protein] + AMP + diphosphate. Its pathway is cell wall biogenesis; lipoteichoic acid biosynthesis. Functionally, catalyzes the first step in the D-alanylation of lipoteichoic acid (LTA), the activation of D-alanine and its transfer onto the D-alanyl carrier protein (Dcp) DltC. In an ATP-dependent two-step reaction, forms a high energy D-alanyl-AMP intermediate, followed by transfer of the D-alanyl residue as a thiol ester to the phosphopantheinyl prosthetic group of the Dcp. D-alanylation of LTA plays an important role in modulating the properties of the cell wall in Gram-positive bacteria, influencing the net charge of the cell wall. The sequence is that of D-alanine--D-alanyl carrier protein ligase from Streptococcus pneumoniae (strain 70585).